A 64-amino-acid polypeptide reads, in one-letter code: Translation machinery-associated protein 7B (64 aa).

The interval 1-38 (MSSHEGGKKKALKQPKKQAKEMDEEEKAFKQKQKEEQK) is disordered. Positions 27–38 (KAFKQKQKEEQK) are enriched in basic and acidic residues.

The protein belongs to the TMA7 family.

The polypeptide is Translation machinery-associated protein 7B (Homo sapiens (Human)).